Here is a 651-residue protein sequence, read N- to C-terminus: Beta-mannosyltransferase 7 (651 aa).

Residues 1 to 19 lie on the Cytoplasmic side of the membrane; that stretch reads MKLEMSSYLHKVPNTGITN. The chain crosses the membrane as a helical span at residues 20-42; the sequence is LSNSKSIVFIMFCATLLFIITSS. At 43–651 the chain is on the extracellular side; that stretch reads RYLTGSESLG…VKIDEKSEET (609 aa). 2 N-linked (GlcNAc...) asparagine glycosylation sites follow: Asn271 and Asn423.

The protein belongs to the BMT family.

The protein localises to the membrane. Functionally, beta-mannosyltransferase involved in cell wall biosynthesis through beta-1,2-mannosylation of cell wall phosphopeptidomannan. This Candida albicans (strain SC5314 / ATCC MYA-2876) (Yeast) protein is Beta-mannosyltransferase 7 (BMT7).